A 466-amino-acid polypeptide reads, in one-letter code: uncharacterized protein (466 aa).

Belongs to the myoviridae tail sheath protein family.

This is an uncharacterized protein from Bacillus subtilis (strain 168).